Reading from the N-terminus, the 828-residue chain is E3 ubiquitin-protein ligase bre-1 (828 aa).

The tract at residues 1–25 (MMKRNNEGIGGEGVANSPPDDTQQK) is disordered. The interaction with ubc-1 stretch occupies residues 1 to 309 (MMKRNNEGIG…SREIEALRAD (309 aa)). Coiled-coil stretches lie at residues 53-92 (QAAKLRQTVLIKNKRISDLERENERAKRRQLTDESNFLKV) and 185-251 (HKEL…TEKQ). Residues 269 to 298 (ASGNATASSSATLNQSEKKMGSPGSPPSES) are compositionally biased toward low complexity. A disordered region spans residues 269–304 (ASGNATASSSATLNQSEKKMGSPGSPPSESTSREIE). Coiled coils occupy residues 311 to 345 (DEQAAIAARRLQELEDTNRKLQSMAQDISKLKMET), 460 to 616 (VNTL…RNLK), and 660 to 756 (DEVL…NDSA). The RING-type zinc finger occupies 776–815 (CPSCKTRPKDCIMLKCYHLFCETCIKTMYDTRQRKCPKCN).

Belongs to the BRE1 family. Interacts with ubc-1. Interacts with mrg-1.

It localises to the nucleus. The catalysed reaction is S-ubiquitinyl-[E2 ubiquitin-conjugating enzyme]-L-cysteine + [acceptor protein]-L-lysine = [E2 ubiquitin-conjugating enzyme]-L-cysteine + N(6)-ubiquitinyl-[acceptor protein]-L-lysine.. The protein operates within protein modification; protein ubiquitination. E3 ubiquitin-protein ligase that mediates monoubiquitination of 'Lys-117' of histone H2B. H2B 'Lys-117' ubiquitination gives a specific tag for epigenetic transcriptional activation and is also prerequisite for histone H3 'Lys-4' and 'Lys-79' methylation. Involved in regulating stem cell proliferative fate. This Caenorhabditis briggsae protein is E3 ubiquitin-protein ligase bre-1.